Here is a 351-residue protein sequence, read N- to C-terminus: Protein RecA (351 aa).

An ATP-binding site is contributed by 67 to 74 (GPESSGKT).

The protein belongs to the RecA family.

The protein localises to the cytoplasm. Can catalyze the hydrolysis of ATP in the presence of single-stranded DNA, the ATP-dependent uptake of single-stranded DNA by duplex DNA, and the ATP-dependent hybridization of homologous single-stranded DNAs. It interacts with LexA causing its activation and leading to its autocatalytic cleavage. This Arthrobacter sp. (strain FB24) protein is Protein RecA.